Reading from the N-terminus, the 415-residue chain is Serine hydroxymethyltransferase (415 aa).

(6S)-5,6,7,8-tetrahydrofolate-binding positions include L119 and G123–L125. Position 228 is an N6-(pyridoxal phosphate)lysine (K228). Residue S353 to F355 participates in (6S)-5,6,7,8-tetrahydrofolate binding.

Belongs to the SHMT family. In terms of assembly, homodimer. The cofactor is pyridoxal 5'-phosphate.

The protein localises to the cytoplasm. It carries out the reaction (6R)-5,10-methylene-5,6,7,8-tetrahydrofolate + glycine + H2O = (6S)-5,6,7,8-tetrahydrofolate + L-serine. The protein operates within one-carbon metabolism; tetrahydrofolate interconversion. It participates in amino-acid biosynthesis; glycine biosynthesis; glycine from L-serine: step 1/1. In terms of biological role, catalyzes the reversible interconversion of serine and glycine with tetrahydrofolate (THF) serving as the one-carbon carrier. Also exhibits THF-independent aldolase activity toward beta-hydroxyamino acids, producing glycine and aldehydes, via a retro-aldol mechanism. The chain is Serine hydroxymethyltransferase from Halorubrum lacusprofundi (strain ATCC 49239 / DSM 5036 / JCM 8891 / ACAM 34).